The following is a 239-amino-acid chain: 2-C-methyl-D-erythritol 4-phosphate cytidylyltransferase (239 aa).

This sequence belongs to the IspD/TarI cytidylyltransferase family. IspD subfamily.

The catalysed reaction is 2-C-methyl-D-erythritol 4-phosphate + CTP + H(+) = 4-CDP-2-C-methyl-D-erythritol + diphosphate. Its pathway is isoprenoid biosynthesis; isopentenyl diphosphate biosynthesis via DXP pathway; isopentenyl diphosphate from 1-deoxy-D-xylulose 5-phosphate: step 2/6. Its function is as follows. Catalyzes the formation of 4-diphosphocytidyl-2-C-methyl-D-erythritol from CTP and 2-C-methyl-D-erythritol 4-phosphate (MEP). The polypeptide is 2-C-methyl-D-erythritol 4-phosphate cytidylyltransferase (Acinetobacter baylyi (strain ATCC 33305 / BD413 / ADP1)).